Consider the following 232-residue polypeptide: MADVDVKKAVVLLSGGLDSATVLAIAQAQGFECHTISFDYGQRHRAELIAAERISRVSGAKTHRVMEMNMHAIGGSALTDDSIDVPVSGVEKEMIPVTYVPARNTVFLSYALALAEVLEADDIFIGVNAVDYSGYPDCRPEYIAAYEKMANLATKAGVEGHKMHIQTPLIDLTKAEIIQTGVKLGVDYSQTVSCYQADKNGAACGICDSCRLRKQGFENAGVTDPTIYASNL.

Residue 13 to 23 (LSGGLDSATVL) participates in ATP binding. Zn(2+)-binding residues include Cys-194, Cys-204, Cys-207, and Cys-210.

Belongs to the QueC family. Zn(2+) is required as a cofactor.

The enzyme catalyses 7-carboxy-7-deazaguanine + NH4(+) + ATP = 7-cyano-7-deazaguanine + ADP + phosphate + H2O + H(+). The protein operates within purine metabolism; 7-cyano-7-deazaguanine biosynthesis. Functionally, catalyzes the ATP-dependent conversion of 7-carboxy-7-deazaguanine (CDG) to 7-cyano-7-deazaguanine (preQ(0)). This chain is 7-cyano-7-deazaguanine synthase, found in Hydrogenovibrio crunogenus (strain DSM 25203 / XCL-2) (Thiomicrospira crunogena).